We begin with the raw amino-acid sequence, 283 residues long: Cyclin-C (283 aa).

One can recognise a Cyclin N-terminal domain in the interval 46–144 (NVIQALGEHL…ILECEFYLLE (99 aa)). The tract at residues 252–283 (TILNKMPKPKPPPNSEGEQGTNGSQSSGYSQS) is disordered. Residues 267 to 283 (EGEQGTNGSQSSGYSQS) show a composition bias toward polar residues.

Belongs to the cyclin family. Cyclin C subfamily. As to quaternary structure, component of the Mediator complex. The cylin/CDK pair formed by ccnc/cdk8 also associates with the large subunit of RNA polymerase II.

It localises to the nucleus. In terms of biological role, component of the Mediator complex, a coactivator involved in regulated gene transcription of nearly all RNA polymerase II-dependent genes. Mediator functions as a bridge to convey information from gene-specific regulatory proteins to the basal RNA polymerase II transcription machinery. Mediator is recruited to promoters by direct interactions with regulatory proteins and serves as a scaffold for the assembly of a functional preinitiation complex with RNA polymerase II and the general transcription factors. Binds to and activates cyclin-dependent kinase cdk8 that phosphorylates the CTD (C-terminal domain) of the large subunit of RNA polymerase II (RNAp II), which may inhibit the formation of a transcription initiation complex. The polypeptide is Cyclin-C (ccnc) (Xenopus tropicalis (Western clawed frog)).